We begin with the raw amino-acid sequence, 320 residues long: 7-acetyl-epi-neemfruitin B aldo-keto reductase (320 aa).

Position 51 (Asp-51) interacts with NADP(+). The Proton donor role is filled by Tyr-56. NADP(+)-binding positions include Gln-186 and 264 to 272 (FNKQRMEEN).

The protein belongs to the aldo/keto reductase family. As to expression, mainly expressed in petioles and, to a lower extent, in roots.

The catalysed reaction is 7-acetyl-epi-neemfruitin B + AH2 + H2O = (1S,3bR,4R,5aR,9aR,9bR,11aS)-1-[(4R)-5-[(2S)-3,3-dimethyloxiran-2-yl]-1,4-dihydroxybutan-2-yl]-3b,6,6,9a,11a-pentamethyl-7-oxo-1H,2H,3bH,4H,5H,5aH,6H,7H,9aH,9bH,10H,11H,11aH-cyclopenta[a]phenanthren-4-yl acetate + acetate + A + H(+). It functions in the pathway secondary metabolite biosynthesis; terpenoid biosynthesis. In terms of biological role, aldo-keto reductase involved in the biosynthesis of limonoids triterpene natural products such as azadirachtin, an antifeedant widely used as bioinsecticide, and possessing many medicinal applications including anti-tumoral, anti-malarial, anti-rheumatic, antibacterial, anti-inflammatory, anti-pyretic and diuretic effects. Can use 7-acetyl-epi-neemfruitin B as substrate. The chain is 7-acetyl-epi-neemfruitin B aldo-keto reductase from Melia azedarach (Chinaberry tree).